The sequence spans 32 residues: Islet amyloid polypeptide (32 aa).

It belongs to the calcitonin family. In terms of assembly, can form homodimers. Interacts with IDE and INS. Interaction with INS inhibits homodimerization and fibril formation.

It is found in the secreted. Functionally, amylin/IAPP is a glucoregulatory peptide hormone that plays an important role in the regulation of energy homeostasis. Selectively inhibits insulin-stimulated glucose utilization and glycogen deposition in muscle, while not affecting adipocyte glucose metabolism. IAPP function is mediated by the CALCR-RAMPs (AMYRs) receptor complexes. Amylin can also bind CALCR receptor in the absence of RAMPs, although it is more selective for AMYRs. This chain is Islet amyloid polypeptide (IAPP), found in Saguinus oedipus (Cotton-top tamarin).